Consider the following 309-residue polypeptide: MEFKHISVLLEETIDSLNIKEDGVYVDCTLGGGGHSKEILKKLSHKGKLIGIDQDTSAIKAAKEKLKDYENIIYVHNNFYNIDSILEELDIDKVDGIIMDLGVSSYQLDEASRGFSYMKDAPLDMRMNREENFSAYNVVNSYEEEELFKILKNYGEEKFSRKIARFIVEKRTENPIETTGELVEIIRKAIPAKFQREGHPAKRTFQAIRIEVNKELQILNKAIEDSVNRLNKDGRLSIITFHSLEDRIVKVKFKELEKPCTCPPSFPICVCGKEPQIKIITKKPIEPSKEEKEINSRSRSAKLRVCRKI.

S-adenosyl-L-methionine is bound by residues 33–35 (GGH), Asp53, Phe79, Asp100, and Gln107.

It belongs to the methyltransferase superfamily. RsmH family.

It localises to the cytoplasm. It catalyses the reaction cytidine(1402) in 16S rRNA + S-adenosyl-L-methionine = N(4)-methylcytidine(1402) in 16S rRNA + S-adenosyl-L-homocysteine + H(+). Its function is as follows. Specifically methylates the N4 position of cytidine in position 1402 (C1402) of 16S rRNA. The protein is Ribosomal RNA small subunit methyltransferase H of Clostridium botulinum (strain Langeland / NCTC 10281 / Type F).